The sequence spans 300 residues: MDLPPQLSFALYVAAFALGFPLNVLAIRGARAHARRRLTPSLVYALNLGCSDLLLTVSLPLKAVEALASGAWPLPASLCPVFGVAHFAPLYAGGGFLAALSAGRYLGAAFPLGYQAFRRPCYSWGVCAAIWALVLCHLGLVFVLEAPGGWLDHSNTSLGINTPVNGSPVCLEAWDPASAGPARFSLSLLLFFLPLAITAFCYVGCLRALAHSGLTHRRKLRAAWVAGGALLTLLLCVGPYNASNVASFLNPNLGGSWRKLGLITGAWSVVLNPLVTGYLGRGPGLKTVCAARTQGSTSQK.

The Extracellular portion of the chain corresponds to 1–8 (MDLPPQLS). The chain crosses the membrane as a helical span at residues 9-31 (FALYVAAFALGFPLNVLAIRGAR). Residues 32 to 41 (AHARRRLTPS) are Cytoplasmic-facing. Residues 42–64 (LVYALNLGCSDLLLTVSLPLKAV) form a helical membrane-spanning segment. Residues 65–79 (EALASGAWPLPASLC) lie on the Extracellular side of the membrane. Cysteine 79 and cysteine 170 are joined by a disulfide. Residues 80–101 (PVFGVAHFAPLYAGGGFLAALS) form a helical membrane-spanning segment. Topologically, residues 102 to 121 (AGRYLGAAFPLGYQAFRRPC) are cytoplasmic. A helical transmembrane segment spans residues 122-142 (YSWGVCAAIWALVLCHLGLVF). Residues 143 to 178 (VLEAPGGWLDHSNTSLGINTPVNGSPVCLEAWDPAS) are Extracellular-facing. An N-linked (GlcNAc...) asparagine glycan is attached at asparagine 155. Residues 179–200 (AGPARFSLSLLLFFLPLAITAF) traverse the membrane as a helical segment. Over 201–223 (CYVGCLRALAHSGLTHRRKLRAA) the chain is Cytoplasmic. The chain crosses the membrane as a helical span at residues 224 to 248 (WVAGGALLTLLLCVGPYNASNVASF). Topologically, residues 249–256 (LNPNLGGS) are extracellular. A helical membrane pass occupies residues 257–279 (WRKLGLITGAWSVVLNPLVTGYL). Residues 280–300 (GRGPGLKTVCAARTQGSTSQK) lie on the Cytoplasmic side of the membrane.

This sequence belongs to the G-protein coupled receptor 1 family.

It is found in the cell membrane. Its function is as follows. G-protein coupled receptor for medium and long chain saturated and unsaturated fatty acids that plays an important role in glucose homeostasis. Fatty acid binding increases glucose-stimulated insulin secretion, and may also enhance the secretion of glucagon-like peptide 1 (GLP-1). May also play a role in bone homeostasis; receptor signaling activates pathways that inhibit osteoclast differentiation. Ligand binding leads to a conformation change that triggers signaling via G-proteins that activate phospholipase C, leading to an increase of the intracellular calcium concentration. Seems to act through a G(q) and G(i)-mediated pathway. Mediates the anti-inflammatory effects of omega-3 polyunsaturated fatty acids (PUFAs) via inhibition of NLRP3 inflammasome activation. This is Free fatty acid receptor 1 (FFAR1) from Macaca fascicularis (Crab-eating macaque).